A 272-amino-acid chain; its full sequence is Small ribosomal subunit protein uS2 (272 aa).

The tract at residues alanine 238–lysine 272 is disordered. Positions lysine 255–lysine 272 are enriched in basic and acidic residues.

The protein belongs to the universal ribosomal protein uS2 family.

The chain is Small ribosomal subunit protein uS2 from Protochlamydia amoebophila (strain UWE25).